Here is a 429-residue protein sequence, read N- to C-terminus: 28S rRNA (cytosine-C(5))-methyltransferase (429 aa).

The residue at position 2 (Gly2) is an N-acetylglycine. Ser167 is modified (phosphoserine). Residues 234–240 (CAAPGNK), Asp258, Arg263, and Asp305 contribute to the S-adenosyl-L-methionine site. The Nucleophile role is filled by Cys359.

Belongs to the class I-like SAM-binding methyltransferase superfamily. RsmB/NOP family. Ubiquitous. Detected in placenta, heart and skeletal muscle.

It is found in the nucleus. The protein localises to the nucleolus. It carries out the reaction cytidine(3782) in 28S rRNA + S-adenosyl-L-methionine = 5-methylcytidine(3782) in 28S rRNA + S-adenosyl-L-homocysteine + H(+). Its function is as follows. S-adenosyl-L-methionine-dependent methyltransferase that specifically methylates the C(5) position of cytosine 3782 (m5C3782) in 28S rRNA. m5C3782 promotes protein translation without affecting ribosome biogenesis and fidelity. Required for corpus callosum and cerebral cortex development. The sequence is that of 28S rRNA (cytosine-C(5))-methyltransferase from Homo sapiens (Human).